Here is a 140-residue protein sequence, read N- to C-terminus: Translation initiation factor 2 subunit beta (140 aa).

This sequence belongs to the eIF-2-beta/eIF-5 family. As to quaternary structure, heterotrimer composed of an alpha, a beta and a gamma chain.

In terms of biological role, eIF-2 functions in the early steps of protein synthesis by forming a ternary complex with GTP and initiator tRNA. The chain is Translation initiation factor 2 subunit beta (eif2b) from Pyrococcus abyssi (strain GE5 / Orsay).